Here is a 440-residue protein sequence, read N- to C-terminus: Probable exopolygalacturonase B (440 aa).

Positions 1–20 (MRLHFLPLVALCATTASSLA) are cleaved as a signal peptide. Residues Asn-65, Asn-190, and Asn-230 are each glycosylated (N-linked (GlcNAc...) asparagine). Catalysis depends on Asp-260, which acts as the Proton donor. Cysteines 262 and 279 form a disulfide. 2 N-linked (GlcNAc...) asparagine glycosylation sites follow: Asn-268 and Asn-280. The active site involves His-283. Residues Asn-307, Asn-334, and Asn-371 are each glycosylated (N-linked (GlcNAc...) asparagine). The cysteines at positions 397 and 403 are disulfide-linked. An N-linked (GlcNAc...) asparagine glycan is attached at Asn-412.

Belongs to the glycosyl hydrolase 28 family.

Its subcellular location is the secreted. The enzyme catalyses [(1-&gt;4)-alpha-D-galacturonosyl](n) + H2O = alpha-D-galacturonate + [(1-&gt;4)-alpha-D-galacturonosyl](n-1). Specific in hydrolyzing the terminal glycosidic bond of polygalacturonic acid and oligogalacturonates. This is Probable exopolygalacturonase B (pgxB) from Emericella nidulans (strain FGSC A4 / ATCC 38163 / CBS 112.46 / NRRL 194 / M139) (Aspergillus nidulans).